The primary structure comprises 209 residues: 3-demethoxyubiquinol 3-hydroxylase (209 aa).

Fe cation-binding residues include E58, E88, H91, E140, E172, and H175.

It belongs to the COQ7 family. The cofactor is Fe cation.

It localises to the cell membrane. The enzyme catalyses a 5-methoxy-2-methyl-3-(all-trans-polyprenyl)benzene-1,4-diol + AH2 + O2 = a 3-demethylubiquinol + A + H2O. It functions in the pathway cofactor biosynthesis; ubiquinone biosynthesis. In terms of biological role, catalyzes the hydroxylation of 2-nonaprenyl-3-methyl-6-methoxy-1,4-benzoquinol during ubiquinone biosynthesis. This is 3-demethoxyubiquinol 3-hydroxylase from Polynucleobacter asymbioticus (strain DSM 18221 / CIP 109841 / QLW-P1DMWA-1) (Polynucleobacter necessarius subsp. asymbioticus).